A 224-amino-acid polypeptide reads, in one-letter code: Response regulator protein GraR (224 aa).

Residues 2-115 (QILLVEDDNT…VLIAKLQAIY (114 aa)) enclose the Response regulatory domain. Aspartate 51 carries the post-translational modification 4-aspartylphosphate. Positions 126 to 224 (KRTLTWQDAV…KVGKGYMAHE (99 aa)) form a DNA-binding region, ompR/PhoB-type. Residues threonine 128, threonine 130, and threonine 149 each carry the phosphothreonine modification.

As to quaternary structure, interacts with GraX. In terms of processing, phosphorylated by GraS. Phosphorylated by Stk1; phosphorylation increases the DNA-binding activity of GraR.

It is found in the cytoplasm. Member of the two-component regulatory system GraR/GraS involved in resistance against cationic antimicrobial peptides (CAMPs). Upon phosphorylation by GraS, functions as a transcription regulator by direct binding to promoter regions of target genes such as adhesins, exoproteins, transporters, toxins, and proteins involved in cell wall synthesis. Down-regulates the expression of many genes involved in RNA and amino acid synthesis or glycolysis. In Staphylococcus aureus (strain Mu3 / ATCC 700698), this protein is Response regulator protein GraR (graR).